Reading from the N-terminus, the 149-residue chain is Cell division protein SepF (149 aa).

This sequence belongs to the SepF family. Homodimer. Interacts with FtsZ.

It is found in the cytoplasm. In terms of biological role, cell division protein that is part of the divisome complex and is recruited early to the Z-ring. Probably stimulates Z-ring formation, perhaps through the cross-linking of FtsZ protofilaments. Its function overlaps with FtsA. This Pelotomaculum thermopropionicum (strain DSM 13744 / JCM 10971 / SI) protein is Cell division protein SepF.